The chain runs to 119 residues: Holo-[acyl-carrier-protein] synthase (119 aa).

Asp8 and Glu58 together coordinate Mg(2+).

It belongs to the P-Pant transferase superfamily. AcpS family. Mg(2+) is required as a cofactor.

It is found in the cytoplasm. The catalysed reaction is apo-[ACP] + CoA = holo-[ACP] + adenosine 3',5'-bisphosphate + H(+). Its function is as follows. Transfers the 4'-phosphopantetheine moiety from coenzyme A to a Ser of acyl-carrier-protein. The polypeptide is Holo-[acyl-carrier-protein] synthase (Bacillus cereus (strain B4264)).